We begin with the raw amino-acid sequence, 905 residues long: Coatomer subunit beta' (905 aa).

WD repeat units follow at residues alanine 13–threonine 52, valine 55–methionine 94, alanine 97–glutamine 136, glycine 140–threonine 180, glycine 183–threonine 224, glycine 227–threonine 266, serine 350–phenylalanine 388, and serine 390–lysine 425. At lysine 627 the chain carries N6-acetyllysine. A WD 9 repeat occupies isoleucine 746–lysine 783. The disordered stretch occupies residues glutamate 837–aspartate 905. A Phosphoserine modification is found at serine 859. A coiled-coil region spans residues glutamine 867–isoleucine 891. The span at glutamate 878–aspartate 905 shows a compositional bias: acidic residues.

The protein belongs to the WD repeat COPB2 family. As to quaternary structure, oligomeric complex that consists of at least the alpha, beta, beta', gamma, delta, epsilon and zeta subunits. Probably interacts with PEX11A. Interacts with JAGN1. Interacts with SCYL1.

The protein localises to the cytoplasm. Its subcellular location is the cytosol. It localises to the golgi apparatus membrane. The protein resides in the cytoplasmic vesicle. It is found in the COPI-coated vesicle membrane. The coatomer is a cytosolic protein complex that binds to dilysine motifs and reversibly associates with Golgi non-clathrin-coated vesicles, which further mediate biosynthetic protein transport from the ER, via the Golgi up to the trans Golgi network. Coatomer complex is required for budding from Golgi membranes, and is essential for the retrograde Golgi-to-ER transport of dilysine-tagged proteins. In mammals, the coatomer can only be recruited by membranes associated to ADP-ribosylation factors (ARFs), which are small GTP-binding proteins; the complex also influences the Golgi structural integrity, as well as the processing, activity, and endocytic recycling of LDL receptors. Its function is as follows. This coatomer complex protein, essential for Golgi budding and vesicular trafficking, is a selective binding protein (RACK) for protein kinase C, epsilon type. It binds to Golgi membranes in a GTP-dependent manner. The chain is Coatomer subunit beta' (Copb2) from Rattus norvegicus (Rat).